The sequence spans 393 residues: Nuclear speckle splicing regulatory protein 1 homolog (393 aa).

The segment at 1 to 49 is disordered; it reads MSAPPKRFGLIVKQKEEPKRAPVRVSSVFGDDDDDEAPATATNTSSASV. Over residues 39–48 the composition is skewed to low complexity; it reads ATATNTSSAS. A coiled-coil region spans residues 76–166; it reads NYDEIQAIKN…YREQEAEEAA (91 aa). The interval 187–350 is disordered; that stretch reads LLNDLARDPT…SLKDKLKPKR (164 aa). The span at 199 to 209 shows a compositional bias: basic residues; the sequence is KQRKMEKKNVR. Composition is skewed to basic and acidic residues over residues 222-236, 243-261, 317-333, and 341-350; these read EDVK…KSIY, DEKK…EGEL, DHAQ…KSPE, and SLKDKLKPKR.

The protein belongs to the NSRP1 family.

The sequence is that of Nuclear speckle splicing regulatory protein 1 homolog from Caenorhabditis briggsae.